The following is a 140-amino-acid chain: Cystatin-like 1 (140 aa).

A signal peptide spans 1–23 (MEMKARGLRIPLLLLLVTVVVMA). The region spanning 32–126 (GGFKEKAMSK…CKSLIYSVPW (95 aa)) is the Cystatin domain. The N-linked (GlcNAc...) asparagine glycan is linked to Asn45. 2 cysteine pairs are disulfide-bonded: Cys94–Cys104 and Cys117–Cys137.

Belongs to the cystatin family. As to expression, highly expressed in testis where it localizes to spermatogonium, spermatocyes and round spermatids. Not detected in spermatozoa. Also detected in epididymis, cerebrum and pituitary.

The protein localises to the secreted. In Mus musculus (Mouse), this protein is Cystatin-like 1.